Consider the following 570-residue polypeptide: Serine/threonine-protein kinase flr-4 (570 aa).

Residues 40 to 331 (YKYIQDLGKG…KLRIQIKKIL (292 aa)) form the Protein kinase domain. ATP contacts are provided by residues 46 to 54 (LGKGRFGTV) and K67. Catalysis depends on D172, which acts as the Proton acceptor. Positions 338–369 (EEETDISHPISNSNTDSSTAISHNHSNDRKVG) are disordered. Over residues 346 to 361 (PISNSNTDSSTAISHN) the composition is skewed to polar residues. 3 helical membrane passes run 400-420 (IMQI…FLNI), 425-445 (ICYL…FLLI), and 471-491 (LIIS…CCMV). Positions 550–570 (VRRNHDDYYYDESSGPANEEN) are disordered.

This sequence belongs to the protein kinase superfamily. Ser/Thr protein kinase family. As to expression, present in the intestinal cells from comma-stage embryos through the adult stage, although the intestinal expression is weaker after the L1 stage. Accumulates at the cell membrane of intestinal cells, especially the lateral membrane intervening the intestinal cells. Also detected in the muscles of the pharyngeal isthmus from the 3-fold embryonic stage, and in a pair of head neurons, which correspond to the AUA neurons, from the late L1 stage (at protein level).

It localises to the membrane. The enzyme catalyses L-seryl-[protein] + ATP = O-phospho-L-seryl-[protein] + ADP + H(+). It catalyses the reaction L-threonyl-[protein] + ATP = O-phospho-L-threonyl-[protein] + ADP + H(+). Its function is as follows. Probable serine-threonine protein kinase involved in the control of defecation rhythms. Required to increase the length of defecation cycle period. Acts in a cell-functional rather than developmental aspect in the regulation of defecation rhythms. Prevents preferential activation of the p38 MAPK pathway in response to the levels of vitamin B12 in different food types during larval development, thereby regulating the expression of cytoprotective genes, modulating life span and stress tolerance. This Caenorhabditis elegans protein is Serine/threonine-protein kinase flr-4 (flr-4).